A 491-amino-acid chain; its full sequence is UDP-N-acetylmuramoyl-L-alanyl-D-glutamate--2,6-diaminopimelate ligase (491 aa).

UDP-N-acetyl-alpha-D-muramoyl-L-alanyl-D-glutamate is bound at residue Ser30. 108 to 114 (GTNGKTT) provides a ligand contact to ATP. UDP-N-acetyl-alpha-D-muramoyl-L-alanyl-D-glutamate-binding positions include Asn149, 150-151 (TT), Ser177, and Arg185. Position 217 is an N6-carboxylysine (Lys217). Residues Arg383, 407 to 410 (DNPR), Gly457, and Glu461 each bind meso-2,6-diaminopimelate. The short motif at 407-410 (DNPR) is the Meso-diaminopimelate recognition motif element.

This sequence belongs to the MurCDEF family. MurE subfamily. The cofactor is Mg(2+). Carboxylation is probably crucial for Mg(2+) binding and, consequently, for the gamma-phosphate positioning of ATP.

Its subcellular location is the cytoplasm. It carries out the reaction UDP-N-acetyl-alpha-D-muramoyl-L-alanyl-D-glutamate + meso-2,6-diaminopimelate + ATP = UDP-N-acetyl-alpha-D-muramoyl-L-alanyl-gamma-D-glutamyl-meso-2,6-diaminopimelate + ADP + phosphate + H(+). Its pathway is cell wall biogenesis; peptidoglycan biosynthesis. In terms of biological role, catalyzes the addition of meso-diaminopimelic acid to the nucleotide precursor UDP-N-acetylmuramoyl-L-alanyl-D-glutamate (UMAG) in the biosynthesis of bacterial cell-wall peptidoglycan. The polypeptide is UDP-N-acetylmuramoyl-L-alanyl-D-glutamate--2,6-diaminopimelate ligase (Bacillus cereus (strain ATCC 14579 / DSM 31 / CCUG 7414 / JCM 2152 / NBRC 15305 / NCIMB 9373 / NCTC 2599 / NRRL B-3711)).